Here is a 55-residue protein sequence, read N- to C-terminus: Photosystem II reaction center protein K (55 aa).

A propeptide spanning residues 1-18 is cleaved from the precursor; it reads MFYIHLENTFDLSSTILV. Residues 26 to 46 form a helical membrane-spanning segment; it reads IFDPIVDVMPIIPLFFFLLAF.

This sequence belongs to the PsbK family. PSII is composed of 1 copy each of membrane proteins PsbA, PsbB, PsbC, PsbD, PsbE, PsbF, PsbH, PsbI, PsbJ, PsbK, PsbL, PsbM, PsbT, PsbX, PsbY, PsbZ, Psb30/Ycf12, at least 3 peripheral proteins of the oxygen-evolving complex and a large number of cofactors. It forms dimeric complexes.

It is found in the plastid. Its subcellular location is the chloroplast thylakoid membrane. Functionally, one of the components of the core complex of photosystem II (PSII). PSII is a light-driven water:plastoquinone oxidoreductase that uses light energy to abstract electrons from H(2)O, generating O(2) and a proton gradient subsequently used for ATP formation. It consists of a core antenna complex that captures photons, and an electron transfer chain that converts photonic excitation into a charge separation. In Anthoceros angustus (Hornwort), this protein is Photosystem II reaction center protein K.